The following is a 227-amino-acid chain: Transmembrane emp24 domain-containing protein 1 (227 aa).

The N-terminal stretch at 1-24 (MMAAGAAVALALWLLLPAVGVGEA) is a signal peptide. The Extracellular portion of the chain corresponds to 25 to 194 (GPPPIQDGEF…LQEDNLERVN (170 aa)). The GOLD domain occupies 43-125 (KQCFYQSAPA…EKLVFFELIF (83 aa)). Residues 145 to 170 (EMLDVKMEDIKESIETMRTRLERSIQ) adopt a coiled-coil conformation. Residues 195 to 215 (FWSAANVAVLLLVAVLQVCTL) traverse the membrane as a helical segment. Over 216-227 (KRFFHDKRPVPT) the chain is Cytoplasmic. A COPII vesicle coat-binding motif is present at residues 218 to 219 (FF). The COPI vesicle coat-binding motif lies at 218 to 227 (FFHDKRPVPT).

It belongs to the EMP24/GP25L family. As to quaternary structure, homodimer in endoplasmic reticulum, endoplasmic reticulum-Golgi intermediate compartment and cis-Golgi network. Interacts with IL1RL1. Interacts with RNF26; this interaction is important to modulate innate immune signaling through the cGAS-STING pathway. In terms of tissue distribution, widely expressed.

It localises to the cell membrane. It is found in the endoplasmic reticulum membrane. The protein resides in the golgi apparatus. The protein localises to the cis-Golgi network membrane. Its subcellular location is the endoplasmic reticulum-Golgi intermediate compartment membrane. Its function is as follows. Potential role in vesicular protein trafficking, mainly in the early secretory pathway. May act as a cargo receptor at the lumenal side for incorporation of secretory cargo molecules into transport vesicles and may be involved in vesicle coat formation at the cytoplasmic side. Plays a positive role in IL-33-mediated IL-8 and IL-6 production by interacting with interleukin-33 receptor IL1RL1. Plays also a role in the modulation of innate immune signaling through the cGAS-STING pathway by interacting with RNF26. In Mus musculus (Mouse), this protein is Transmembrane emp24 domain-containing protein 1 (Tmed1).